The following is a 495-amino-acid chain: WD repeat-containing protein 37 (495 aa).

Polar residues-rich tracts occupy residues 1-13 (MPTESASCSTARQ) and 22-31 (SLSIRRTNSS). The disordered stretch occupies residues 1 to 50 (MPTESASCSTARQTKQKRKSHSLSIRRTNSSEQERTGLPRDMLEGQDSKL). Positions 32–47 (EQERTGLPRDMLEGQD) are enriched in basic and acidic residues. WD repeat units lie at residues 154–194 (GHRD…CLVK) and 197–236 (GHVGSVNSIKFHPSEQLALTASGDQTAHIWRYAVQLPTPQ). The segment at 237-266 (PVADTSQISGEDEVECSDKDEPDLDGDVSS) is disordered. The span at 246-264 (GEDEVECSDKDEPDLDGDV) shows a compositional bias: acidic residues. WD repeat units lie at residues 280–319 (SHQGVVIAADWLVGGKQAVTASWDRTANLYDVETSELVHS), 322–361 (GHDQELTHCCTHPTQRLVVTSSRDTTFRLWDFRDPSIHSV), 366–404 (GHTDTVTSAVFTVGDNVVSGSDDRTVKVWDLKNMRSPIA), 407–446 (RTDSAINRINVCVGQKIIALPHDNRQVRLFDMSGVRLARL), and 453–494 (GHRR…LLQE).

Forms homodimers. Interacts with PACS1. Interacts with PACS2.

The protein localises to the cytoplasm. Its subcellular location is the nucleus. Its function is as follows. Required for normal ER Ca2+ handling in lymphocytes. Together with PACS1, it plays an essential role in stabilizing peripheral lymphocyte populations. The polypeptide is WD repeat-containing protein 37 (WDR37) (Pongo abelii (Sumatran orangutan)).